The sequence spans 466 residues: Hydroxyacid-oxoacid transhydrogenase, mitochondrial (466 aa).

Lysine 444 bears the N6-acetyllysine mark. Serine 451 bears the Phosphoserine mark.

This sequence belongs to the iron-containing alcohol dehydrogenase family. Hydroxyacid-oxoacid transhydrogenase subfamily.

It localises to the mitochondrion. It catalyses the reaction (S)-3-hydroxybutanoate + 2-oxoglutarate = (R)-2-hydroxyglutarate + acetoacetate. The catalysed reaction is 4-hydroxybutanoate + 2-oxoglutarate = (R)-2-hydroxyglutarate + succinate semialdehyde. Functionally, catalyzes the cofactor-independent reversible oxidation of gamma-hydroxybutyrate (GHB) to succinic semialdehyde (SSA) coupled to reduction of 2-ketoglutarate (2-KG) to D-2-hydroxyglutarate (D-2-HG). L-3-hydroxybutyrate (L-3-OHB) is also a substrate for HOT when using 2-KG as hydrogen acceptor, resulting in the formation of D-2-HG. The chain is Hydroxyacid-oxoacid transhydrogenase, mitochondrial (ADHFE1) from Bos taurus (Bovine).